Here is a 542-residue protein sequence, read N- to C-terminus: Anaerobic glycerol-3-phosphate dehydrogenase subunit A (542 aa).

10–38 is a binding site for FAD; it reads DVIIIGGGATGAGIARDCALRGLRVILVE.

The protein belongs to the FAD-dependent glycerol-3-phosphate dehydrogenase family. In terms of assembly, composed of a catalytic GlpA/B dimer and of membrane bound GlpC. It depends on FAD as a cofactor. The cofactor is FMN.

The protein localises to the cell inner membrane. The catalysed reaction is a quinone + sn-glycerol 3-phosphate = dihydroxyacetone phosphate + a quinol. It functions in the pathway polyol metabolism; glycerol degradation via glycerol kinase pathway; glycerone phosphate from sn-glycerol 3-phosphate (anaerobic route): step 1/1. Conversion of glycerol 3-phosphate to dihydroxyacetone. Uses fumarate or nitrate as electron acceptor. The protein is Anaerobic glycerol-3-phosphate dehydrogenase subunit A (glpA) of Escherichia coli O157:H7.